Consider the following 246-residue polypeptide: 14-3-3 protein beta/alpha (246 aa).

At Met1 the chain carries N-acetylmethionine. Thr2 bears the N-acetylthreonine; in 14-3-3 protein beta/alpha, N-terminally processed mark. Thr2 is subject to Phosphothreonine. At Lys5 the chain carries N6-acetyllysine. An N6-acetyllysine; alternate modification is found at Lys51. Residue Lys51 forms a Glycyl lysine isopeptide (Lys-Gly) (interchain with G-Cter in SUMO2); alternate linkage. Ser60 carries the post-translational modification Phosphoserine. Residue Lys70 is modified to N6-acetyllysine. 2 positions are modified to 3'-nitrotyrosine: Tyr84 and Tyr106. The residue at position 117 (Lys117) is an N6-acetyllysine. Ser186 and Ser232 each carry phosphoserine.

It belongs to the 14-3-3 family. As to quaternary structure, homodimer. Interacts with SAMSN1 and PRKCE. Interacts with AKAP13. Interacts with SSH1 and TORC2/CRTC2. Interacts with ABL1; the interaction results in cytoplasmic location of ABL1 and inhibition of cABL-mediated apoptosis. Interacts with ROR2 (dimer); the interaction results in phosphorylation of YWHAB on tyrosine residues. Interacts with GAB2. Interacts with YAP1 (phosphorylated form). Interacts with the phosphorylated (by AKT1) form of SRPK2. Interacts with PKA-phosphorylated AANAT. Interacts with MYO1C. Interacts with SIRT2. Interacts with the 'Thr-369' phosphorylated form of DAPK2. Interacts with PI4KB, TBC1D22A and TBC1D22B. Interacts with the 'Ser-1134' and 'Ser-1161' phosphorylated form of SOS1. Interacts (via phosphorylated form) with YWHAB; this interaction occurs in a protein kinase AKT1-dependent manner. Interacts with SLITRK1. Interacts with SYNPO2 (phosphorylated form); YWHAB competes with ACTN2 for interaction with SYNPO2. Interacts with RIPOR2 (via phosphorylated form); this interaction occurs in a chemokine-dependent manner and does not compete for binding of RIPOR2 with RHOA nor blocks inhibition of RIPOR2-mediated RHOA activity. Interacts with MARK2 and MARK3. Interacts with TESK1; the interaction is dependent on the phosphorylation of TESK1 'Ser-439' and inhibits TESK1 kinase activity. Interacts with MEFV. Interacts with HDAC4. Interacts with ADAM22 (via C-terminus). In terms of processing, isoform alpha differs from isoform beta in being phosphorylated. Phosphorylated on Ser-60 by protein kinase C delta type catalytic subunit in a sphingosine-dependent fashion. Post-translationally, isoform Short contains a N-acetylmethionine at position 1.

It localises to the cytoplasm. It is found in the melanosome. Functionally, adapter protein implicated in the regulation of a large spectrum of both general and specialized signaling pathways. Binds to a large number of partners, usually by recognition of a phosphoserine or phosphothreonine motif. Binding generally results in the modulation of the activity of the binding partner. Negative regulator of osteogenesis. Blocks the nuclear translocation of the phosphorylated form (by AKT1) of SRPK2 and antagonizes its stimulatory effect on cyclin D1 expression resulting in blockage of neuronal apoptosis elicited by SRPK2. Negative regulator of signaling cascades that mediate activation of MAP kinases via AKAP13. This chain is 14-3-3 protein beta/alpha (Ywhab), found in Mus musculus (Mouse).